A 792-amino-acid chain; its full sequence is uncharacterized protein (792 aa).

361-362 (WD) serves as a coordination point for substrate. E488 functions as the Proton donor in the catalytic mechanism. 590–591 (KQ) serves as a coordination point for substrate. Residues 753 to 792 (DSPSTIAVRDRKPLLPPPSQPPGREPVSRRHKSLIISAAR) are disordered. Over residues 766–776 (LLPPPSQPPGR) the composition is skewed to pro residues.

The protein belongs to the glycosyl hydrolase 65 family.

This is an uncharacterized protein from Mycobacterium leprae (strain TN).